The primary structure comprises 297 residues: Nitrogenase iron protein (297 aa).

Residue 11 to 18 (GKGGIGKS) coordinates ATP. Residue cysteine 99 coordinates [4Fe-4S] cluster. Arginine 102 carries the post-translational modification ADP-ribosylarginine; by dinitrogenase reductase ADP-ribosyltransferase. Cysteine 133 is a [4Fe-4S] cluster binding site.

It belongs to the NifH/BchL/ChlL family. In terms of assembly, homodimer. It depends on [4Fe-4S] cluster as a cofactor. The reversible ADP-ribosylation of Arg-102 inactivates the nitrogenase reductase and regulates nitrogenase activity.

It carries out the reaction N2 + 8 reduced [2Fe-2S]-[ferredoxin] + 16 ATP + 16 H2O = H2 + 8 oxidized [2Fe-2S]-[ferredoxin] + 2 NH4(+) + 16 ADP + 16 phosphate + 6 H(+). Its function is as follows. The key enzymatic reactions in nitrogen fixation are catalyzed by the nitrogenase complex, which has 2 components: the iron protein and the molybdenum-iron protein. The protein is Nitrogenase iron protein (nifH) of Rhizobium etli.